The sequence spans 212 residues: Peptide methionine sulfoxide reductase MsrA (212 aa).

C52 is a catalytic residue.

Belongs to the MsrA Met sulfoxide reductase family.

The enzyme catalyses L-methionyl-[protein] + [thioredoxin]-disulfide + H2O = L-methionyl-(S)-S-oxide-[protein] + [thioredoxin]-dithiol. It catalyses the reaction [thioredoxin]-disulfide + L-methionine + H2O = L-methionine (S)-S-oxide + [thioredoxin]-dithiol. Functionally, has an important function as a repair enzyme for proteins that have been inactivated by oxidation. Catalyzes the reversible oxidation-reduction of methionine sulfoxide in proteins to methionine. This Cronobacter sakazakii (strain ATCC BAA-894) (Enterobacter sakazakii) protein is Peptide methionine sulfoxide reductase MsrA.